The sequence spans 498 residues: Aspartyl aminopeptidase (498 aa).

A Zn(2+)-binding site is contributed by His91. Residue His166 participates in substrate binding. Zn(2+) is bound at residue Asp274. Glu311 serves as a coordination point for substrate. Positions 312 and 363 each coordinate Zn(2+). Residues Asp363, His366, Lys391, and Tyr398 each coordinate substrate. His463 contributes to the Zn(2+) binding site.

The protein belongs to the peptidase M18 family. As to quaternary structure, tetrahedron-shaped homododecamer built from six homodimers. It depends on Zn(2+) as a cofactor. The N-terminus is blocked.

The catalysed reaction is Release of an N-terminal aspartate or glutamate from a peptide, with a preference for aspartate.. With respect to regulation, inhibited by zinc. Stimulated by calcium and bacitracin. This chain is Aspartyl aminopeptidase (dapA), found in Aspergillus oryzae (strain ATCC 42149 / RIB 40) (Yellow koji mold).